Here is a 145-residue protein sequence, read N- to C-terminus: Probable flagellum biosynthesis repressor protein FlbT (145 aa).

Belongs to the FlbT family.

Has a post-transcriptional repressor function in flagellum biogenesis. Associates with the 5'-UTR of fljK mRNA and promotes its degradation. The polypeptide is Probable flagellum biosynthesis repressor protein FlbT (Chelativorans sp. (strain BNC1)).